Here is a 632-residue protein sequence, read N- to C-terminus: 1-deoxy-D-xylulose-5-phosphate synthase (632 aa).

Residues H79 and 120 to 122 each bind thiamine diphosphate; that span reads GHA. D152 serves as a coordination point for Mg(2+). Residues 153–154, N181, F293, and E377 contribute to the thiamine diphosphate site; that span reads GS. Position 181 (N181) interacts with Mg(2+).

This sequence belongs to the transketolase family. DXPS subfamily. In terms of assembly, homodimer. Mg(2+) is required as a cofactor. It depends on thiamine diphosphate as a cofactor.

The catalysed reaction is D-glyceraldehyde 3-phosphate + pyruvate + H(+) = 1-deoxy-D-xylulose 5-phosphate + CO2. Its pathway is metabolic intermediate biosynthesis; 1-deoxy-D-xylulose 5-phosphate biosynthesis; 1-deoxy-D-xylulose 5-phosphate from D-glyceraldehyde 3-phosphate and pyruvate: step 1/1. Its function is as follows. Catalyzes the acyloin condensation reaction between C atoms 2 and 3 of pyruvate and glyceraldehyde 3-phosphate to yield 1-deoxy-D-xylulose-5-phosphate (DXP). This Phocaeicola vulgatus (strain ATCC 8482 / DSM 1447 / JCM 5826 / CCUG 4940 / NBRC 14291 / NCTC 11154) (Bacteroides vulgatus) protein is 1-deoxy-D-xylulose-5-phosphate synthase.